The sequence spans 128 residues: Adrenodoxin homolog (128 aa).

Residues 12–115 enclose the 2Fe-2S ferredoxin-type domain; the sequence is EQIRIFFKTM…NAVFTVPRAT (104 aa). Residues Cys-50, Cys-56, Cys-59, and Cys-96 each coordinate [2Fe-2S] cluster.

The protein belongs to the adrenodoxin/putidaredoxin family. [2Fe-2S] cluster serves as cofactor.

Its subcellular location is the mitosome. Ferredoxins are iron-sulfur proteins that transfer electrons in a wide variety of metabolic reactions. The chain is Adrenodoxin homolog from Encephalitozoon cuniculi (strain GB-M1) (Microsporidian parasite).